Reading from the N-terminus, the 325-residue chain is MTDVSRKIRAWGRRLMIGTAAAVVLPGLVGLAGGAATAGAFSRPGLPVEYLQVPSPSMGRDIKVQFQSGGNNSPAVYLLDGLRAQDDYNGWDINTPAFEWYYQSGLSIVMPVGGQSSFYSDWYSPACGKAGCQTYKWETLLTSELPQWLSANRAVKPTGSAAIGLSMAGSSAMILAAYHPQQFIYAGSLSALLDPSQGMGPSLIGLAMGDAGGYKAADMWGPSSDPAWERNDPTQQIPKLVANNTRLWVYCGNGTPNELGGANIPAEFLENFVRSSNLKFQDAYNAAGGHNAVFNFPPNGTHSWEYWGAQLNAMKGDLQSSLGAG.

The signal sequence occupies residues 1 to 40 (MTDVSRKIRAWGRRLMIGTAAAVVLPGLVGLAGGAATAGA). 82-83 (LR) serves as a coordination point for substrate. Residues 98–108 (FEWYYQSGLSI) are fibronectin-binding. An intrachain disulfide couples cysteine 127 to cysteine 132. Positions 166 and 194 each coordinate substrate. The Nucleophile role is filled by serine 166. Glutamate 270 is a catalytic residue. Substrate contacts are provided by residues 272 to 275 (FVRS), lysine 279, and 302 to 304 (HSW). Residue histidine 302 is part of the active site.

Belongs to the mycobacterial A85 antigen family.

The protein resides in the secreted. The enzyme catalyses 2 alpha,alpha'-trehalose 6-mycolate = alpha,alpha'-trehalose 6,6'-bismycolate + alpha,alpha-trehalose. It catalyses the reaction an acyl-CoA + a 1,2-diacyl-sn-glycerol = a triacyl-sn-glycerol + CoA. Functionally, the antigen 85 proteins (FbpA, FbpB, FbpC) are responsible for the high affinity of mycobacteria for fibronectin, a large adhesive glycoprotein, which facilitates the attachment of Mycobacteria to murine alveolar macrophages (AMs). They also help to maintain the integrity of the cell wall by catalyzing the transfer of mycolic acids to cell wall arabinogalactan and through the synthesis of alpha,alpha-trehalose dimycolate (TDM, cord factor). They catalyze the transfer of a mycoloyl residue from one molecule of alpha,alpha-trehalose monomycolate (TMM) to another TMM, leading to the formation of TDM. The chain is Diacylglycerol acyltransferase/mycolyltransferase Ag85B (fbpB) from Mycobacterium bovis (strain BCG / Pasteur 1173P2).